Here is a 159-residue protein sequence, read N- to C-terminus: MAEQTEKAFLKQPKVFLSSKKSGKGKRPGKGGNRFWKNIGLGFKTPREAIEGTYIDQKCPFTGTVSIRGRILSGTCHSAKMQRTIIVRRDYLHFVKKYRRYEKRHSNIPAHVSPCFRVKEGDRVTIGQCRPLSKTVRFNVLKVIPAGSSSIGKKAFTGM.

Belongs to the universal ribosomal protein uS17 family.

The protein resides in the cytoplasm. In Arabidopsis thaliana (Mouse-ear cress), this protein is Small ribosomal subunit protein uS17y (RPS11B).